The chain runs to 387 residues: Deoxyguanosinetriphosphate triphosphohydrolase-like protein (387 aa).

The tract at residues 1–26 (MTAPYASDPQRARGRRVKEEESTFRS) is disordered. Positions 17–26 (VKEEESTFRS) are enriched in basic and acidic residues. The 137-residue stretch at 62 to 198 (RLTHSIEVAQ…AAIADDVAYN (137 aa)) folds into the HD domain.

The protein belongs to the dGTPase family. Type 2 subfamily.

This chain is Deoxyguanosinetriphosphate triphosphohydrolase-like protein, found in Roseobacter denitrificans (strain ATCC 33942 / OCh 114) (Erythrobacter sp. (strain OCh 114)).